Consider the following 102-residue polypeptide: NADH-quinone oxidoreductase subunit K (102 aa).

3 helical membrane-spanning segments follow: residues 6–26 (MEHG…GLLI), 30–50 (LLYI…AFVV), and 65–85 (ILVI…LLLL).

Belongs to the complex I subunit 4L family. In terms of assembly, NDH-1 is composed of 13 different subunits. Subunits NuoA, H, J, K, L, M, N constitute the membrane sector of the complex.

Its subcellular location is the cell inner membrane. It catalyses the reaction a quinone + NADH + 5 H(+)(in) = a quinol + NAD(+) + 4 H(+)(out). Its function is as follows. NDH-1 shuttles electrons from NADH, via FMN and iron-sulfur (Fe-S) centers, to quinones in the respiratory chain. The immediate electron acceptor for the enzyme in this species is believed to be ubiquinone. Couples the redox reaction to proton translocation (for every two electrons transferred, four hydrogen ions are translocated across the cytoplasmic membrane), and thus conserves the redox energy in a proton gradient. The chain is NADH-quinone oxidoreductase subunit K from Shewanella oneidensis (strain ATCC 700550 / JCM 31522 / CIP 106686 / LMG 19005 / NCIMB 14063 / MR-1).